We begin with the raw amino-acid sequence, 949 residues long: Leucine--tRNA ligase (949 aa).

The 'HIGH' region signature appears at Pro-68–His-79. The interval Val-540 to Gly-562 is disordered. Residues Lys-722–Ser-726 carry the 'KMSKS' region motif. Lys-725 contacts ATP.

Belongs to the class-I aminoacyl-tRNA synthetase family.

It is found in the cytoplasm. It catalyses the reaction tRNA(Leu) + L-leucine + ATP = L-leucyl-tRNA(Leu) + AMP + diphosphate. This is Leucine--tRNA ligase from Mycolicibacterium gilvum (strain PYR-GCK) (Mycobacterium gilvum (strain PYR-GCK)).